The primary structure comprises 185 residues: Threonylcarbamoyl-AMP synthase (185 aa).

Residues 7-185 (AAQRRAARAH…IDFASGRVLR (179 aa)) enclose the YrdC-like domain.

Belongs to the SUA5 family. TsaC subfamily.

Its subcellular location is the cytoplasm. It carries out the reaction L-threonine + hydrogencarbonate + ATP = L-threonylcarbamoyladenylate + diphosphate + H2O. Functionally, required for the formation of a threonylcarbamoyl group on adenosine at position 37 (t(6)A37) in tRNAs that read codons beginning with adenine. Catalyzes the conversion of L-threonine, HCO(3)(-)/CO(2) and ATP to give threonylcarbamoyl-AMP (TC-AMP) as the acyladenylate intermediate, with the release of diphosphate. This chain is Threonylcarbamoyl-AMP synthase, found in Laribacter hongkongensis (strain HLHK9).